Consider the following 98-residue polypeptide: UPF0473 protein LSL_1108 (98 aa).

The protein belongs to the UPF0473 family.

This chain is UPF0473 protein LSL_1108, found in Ligilactobacillus salivarius (strain UCC118) (Lactobacillus salivarius).